The primary structure comprises 583 residues: Septin-9 (583 aa).

At Met1 the chain carries N-acetylmethionine. The segment covering 1-14 (MKKSYSGVTRTSSG) has biased composition (polar residues). The interval 1 to 49 (MKKSYSGVTRTSSGRLRRLADPTGPALKRSFEVEEIEPPNSTPPRRVQT) is disordered. Ser30 bears the Phosphoserine mark. Phosphothreonine is present on residues Thr42 and Thr49. At Lys62 the chain carries N6-acetyllysine. The disordered stretch occupies residues 79-105 (DSLSQRSPKPSLRRVELAGAKAPEPMS). Ser82, Ser85, and Ser89 each carry phosphoserine. Thr143 carries the post-translational modification Phosphothreonine. A disordered region spans residues 166-252 (VETPASKIPE…TPSCVGDMAD (87 aa)). The segment covering 204 to 221 (LPSQTLENSEAPMSQLQS) has biased composition (polar residues). Tyr276 carries the phosphotyrosine modification. Positions 293 to 565 (QGFEFNIMVV…EAYRVKRLNE (273 aa)) constitute a Septin-type G domain. The G1 motif stretch occupies residues 303 to 310 (GQSGLGKS). Residue 303-310 (GQSGLGKS) participates in GTP binding. Residues Ser325 and Ser330 each carry the phosphoserine modification. GTP is bound by residues Thr337, Gly363, 443–451 (KADTLTLEE), Gly499, and Arg514. A G3 motif region spans residues 360 to 363 (DTPG). The tract at residues 442 to 445 (AKAD) is G4 motif.

The protein belongs to the TRAFAC class TrmE-Era-EngA-EngB-Septin-like GTPase superfamily. Septin GTPase family. Septins polymerize into heterooligomeric protein complexes that form filaments, and associate with cellular membranes, actin filaments, and microtubules. GTPase activity is required for filament formation. Interacts with SEPTIN2, SEPTIN6, SEPTIN7, SEPTIN11 and SEPTIN14. Interacts with RTKN and ARHGEF18. As to expression, expressed in all tissues examined except muscle. Isoforms are differentially expressed in testes, kidney, liver, heart, spleen and brain.

Its subcellular location is the cytoplasm. The protein resides in the cytoskeleton. Filament-forming cytoskeletal GTPase. May play a role in cytokinesis (Potential). In Mus musculus (Mouse), this protein is Septin-9.